The following is a 128-amino-acid chain: MSGRGKTGGKARAKAKTRSSRAGLQFPVGRVHRLLRKGNYAERVGAGAPVYLAAVLEYLTAEILELAGNAARDNKKTRIIPRHLQLAVRNDEELNKLLGGVTIAQGGVLPNIQAVLLPKKTEKAVKAK.

Residues 1-22 (MSGRGKTGGKARAKAKTRSSRA) form a disordered region. Serine 2 bears the N-acetylserine mark. Phosphoserine is present on serine 2. Position 6 is an N6-(2-hydroxyisobutyryl)lysine (lysine 6). Lysine 6 carries the N6-acetyllysine modification. Over residues 7–19 (TGGKARAKAKTRS) the composition is skewed to basic residues. Lysine 10 carries the N6-(2-hydroxyisobutyryl)lysine; alternate modification. At lysine 10 the chain carries N6-lactoyllysine; alternate. Position 10 is an N6-succinyllysine (lysine 10). Glycyl lysine isopeptide (Lys-Gly) (interchain with G-Cter in ubiquitin) cross-links involve residues lysine 14 and lysine 16. Lysine 37 is modified (N6-(2-hydroxyisobutyryl)lysine; alternate). N6-(2-hydroxyisobutyryl)lysine is present on residues lysine 75 and lysine 76. An N6-(2-hydroxyisobutyryl)lysine; alternate modification is found at lysine 96. At lysine 96 the chain carries N6-succinyllysine. Lysine 96 carries the N6-glutaryllysine; alternate modification. Glutamine 105 carries the post-translational modification N5-methylglutamine. Position 119 is an N6-(2-hydroxyisobutyryl)lysine; alternate (lysine 119). N6-glutaryllysine; alternate is present on residues lysine 119, lysine 120, and lysine 126. Lysine 120 is covalently cross-linked (Glycyl lysine isopeptide (Lys-Gly) (interchain with G-Cter in ubiquitin)).

In terms of assembly, the nucleosome is a histone octamer containing two molecules each of H2A, H2B, H3 and H4 assembled in one H3-H4 heterotetramer and two H2A-H2B heterodimers. The octamer wraps approximately 147 bp of DNA. Monoubiquitination of Lys-120 (H2AK119Ub) gives a specific tag for epigenetic transcriptional repression. Following DNA double-strand breaks (DSBs), it is ubiquitinated through 'Lys-63' linkage of ubiquitin moieties, leading to the recruitment of repair proteins to sites of DNA damage. H2AK119Ub and ionizing radiation-induced 'Lys-63'-linked ubiquitination are distinct events. In terms of processing, phosphorylation on Ser-2 is enhanced during mitosis. Phosphorylation on Ser-2 directly represses transcription. Post-translationally, glutamine methylation at Gln-105 (H2AQ104me) by FBL is specifically dedicated to polymerase I. It is present at 35S ribosomal DNA locus and impairs binding of the FACT complex. As to expression, expressed and secreted by skin epithelium.

The protein localises to the nucleus. It localises to the chromosome. Its function is as follows. Core component of nucleosome. Nucleosomes wrap and compact DNA into chromatin, limiting DNA accessibility to the cellular machineries which require DNA as a template. Histones thereby play a central role in transcription regulation, DNA repair, DNA replication and chromosomal stability. DNA accessibility is regulated via a complex set of post-translational modifications of histones, also called histone code, and nucleosome remodeling. The secreted form has antibacterial activity against Gram-positive bacteria and antifungal activity against S.cerevisiae. This Oncorhynchus mykiss (Rainbow trout) protein is Histone H2A.